We begin with the raw amino-acid sequence, 284 residues long: Bifunctional protein FolD (284 aa).

NADP(+)-binding positions include glycine 166 to serine 168 and isoleucine 232.

This sequence belongs to the tetrahydrofolate dehydrogenase/cyclohydrolase family. Homodimer.

The enzyme catalyses (6R)-5,10-methylene-5,6,7,8-tetrahydrofolate + NADP(+) = (6R)-5,10-methenyltetrahydrofolate + NADPH. It carries out the reaction (6R)-5,10-methenyltetrahydrofolate + H2O = (6R)-10-formyltetrahydrofolate + H(+). The protein operates within one-carbon metabolism; tetrahydrofolate interconversion. Catalyzes the oxidation of 5,10-methylenetetrahydrofolate to 5,10-methenyltetrahydrofolate and then the hydrolysis of 5,10-methenyltetrahydrofolate to 10-formyltetrahydrofolate. This is Bifunctional protein FolD from Shewanella sp. (strain W3-18-1).